Reading from the N-terminus, the 964-residue chain is Syndetin (964 aa).

An N-acetylmethionine modification is found at Met-1. Residues 1-25 (MQKIKSLMTRQGLKSPPESLNDLGA) form a disordered region. At Ser-15 the chain carries Phosphoserine. Coiled-coil stretches lie at residues 81-107 (LNLQ…VADL) and 216-244 (YSCI…LSKI). Residues Ser-494, Ser-498, Ser-559, and Ser-561 each carry the phosphoserine modification. The interval 532–563 (DEETEDVLASNGYESDEQEKSAYQDYDSDSDV) is disordered. A Glycyl lysine isopeptide (Lys-Gly) (interchain with G-Cter in SUMO1); alternate cross-link involves residue Lys-963. Residue Lys-963 forms a Glycyl lysine isopeptide (Lys-Gly) (interchain with G-Cter in SUMO2); alternate linkage.

It belongs to the syndetin family. In terms of assembly, component of the endosome-associated retrograde protein (EARP) complex, composed of VPS51, VPS52, VPS53 and VPS50/Syndetin. The EARP complex interacts with EIPR1. Interacts with VPS51 and VPS53 in an EIPR1-independent manner.

The protein localises to the recycling endosome. It is found in the membrane. In terms of biological role, acts as a component of the EARP complex that is involved in endocytic recycling. The EARP complex associates with Rab4-positive endosomes and promotes recycling of internalized transferrin receptor (TFRC) to the plasma membrane. Within the EARP complex, required to tether the complex to recycling endosomes. Not involved in retrograde transport from early and late endosomes to the trans-Golgi network (TGN). This is Syndetin from Mus musculus (Mouse).